We begin with the raw amino-acid sequence, 293 residues long: Probable metal transport system membrane protein TC_0698 (293 aa).

7 consecutive transmembrane segments (helical) span residues 18-38 (SLLAAFGASIAGGIVGSYIVV), 41-61 (IVSISGSIAHSILGGVGIALW), 68-88 (LPISPLHGAIASAIFVAICIG), 101-121 (IISMIWSIGMAVGMLCISKLP), 142-162 (DLYFLGILDLLIVATVSICHT), 186-206 (FLLLILTAITTVVLMYVMGVI), and 242-262 (FLGIILAYILDLPVGPIIAIL).

The protein belongs to the ABC-3 integral membrane protein family.

It is found in the cell inner membrane. Functionally, part of an ATP-driven transport system TC_0696/TC_0697/TC_0698 for a metal. The protein is Probable metal transport system membrane protein TC_0698 of Chlamydia muridarum (strain MoPn / Nigg).